We begin with the raw amino-acid sequence, 985 residues long: Eukaryotic translation initiation factor 4E transporter (985 aa).

Residues 1–24 (MDRRSMGETESGDAFLDLKKPPAS) are disordered. Serine 5 is modified (phosphoserine). The YXXXXLphi motif motif lies at 30 to 36 (YTKEELL). Residues serine 74, serine 78, serine 115, serine 120, serine 136, and serine 138 each carry the phosphoserine modification. The segment at 131 to 161 (VSSRRSGSPLEKDSDGLRLLGGRRIGSGRII) is interaction with CSDE1. The Nuclear localization signal signature appears at 195–211 (RREFGDSKRVFGERRRN). Residues 208-230 (RRRNDSYTEEEPEWFSAGPTSQS) are disordered. Residues 219-240 (PEWFSAGPTSQSETIELTGFDD) are interaction with DDX6. Residues serine 301, serine 345, serine 353, and serine 374 each carry the phosphoserine modification. Lysine 410 participates in a covalent cross-link: Glycyl lysine isopeptide (Lys-Gly) (interchain with G-Cter in SUMO2). Serine 417 carries the post-translational modification Phosphoserine. The Nuclear export signal motif lies at 438-447 (VEAGLKGLKV). Residues 448 to 490 (DQQVKNSTPFMAEHLEETLSAVTNNRQLKKDGDMTAFNKLVST) are interaction with LSM14A. Position 486 is an N6-acetyllysine (lysine 486). 3 positions are modified to phosphoserine: serine 513, serine 564, and serine 587. Residues 613-638 (ITAQMSQLELQQAALEGLALPHDLAV) carry the Nuclear export signal motif. Disordered stretches follow at residues 664–693 (QQRVTKSPAPVHRGNSSSPAPAASITSMLS) and 707–803 (ESKE…PTTP). A Phosphoserine modification is found at serine 693. Residues 695–713 (SFTPTSVIRKMYESKEKSK) are interaction with PATL1. 2 stretches are compositionally biased toward basic and acidic residues: residues 707–717 (ESKEKSKEEPA) and 725–735 (DSKEDTQKASE). Low complexity predominate over residues 736-746 (ENLLSSSSVPS). Serine 752 is subject to Phosphoserine. Residues 754–776 (TTNSKLSALQRSSCSTPLSQANR) are compositionally biased toward polar residues. Phosphoserine is present on residues serine 920 and serine 951. The disordered stretch occupies residues 922–953 (QTTPQNVPSRSGLPHMHSQLEHRPSQRSSSPV). The interaction with LSM14A stretch occupies residues 940–985 (QLEHRPSQRSSSPVGLAKWFGSDVLQQPLPSMPAKVISVDELEYRQ).

It belongs to the 4E-T/EIF4E-T family. Interacts (via YXXXXLphi motif) with EIF4E. Interacts (via YXXXXLphi motif) with EIF4E2. Interacts with DDX6. Interacts with CSDE1/UNR. Interacts with CNOT1; promoting association with the CCR4-NOT complex. Interacts with LSM14A; promoting EIF4ENIF1 localization to P-bodies. Interacts with PATL1. Interacts with importin beta only in the presence of importin alpha, suggesting a direct interaction with importin alpha. Interacts with APOBEC3G in an RNA-dependent manner. Post-translationally, phosphorylation by MAPK8/JNK1 and or MAPK9/JNK2 in response to oxidative stress promotes P-body assembly. Phosphorylated during meiotic maturation. Widely expressed.

It localises to the cytoplasm. Its subcellular location is the P-body. The protein resides in the nucleus. It is found in the PML body. The protein localises to the nucleus speckle. EIF4E-binding protein that regulates translation and stability of mRNAs in processing bodies (P-bodies). Plays a key role in P-bodies to coordinate the storage of translationally inactive mRNAs in the cytoplasm and prevent their degradation. Acts as a binding platform for multiple RNA-binding proteins: promotes deadenylation of mRNAs via its interaction with the CCR4-NOT complex, and blocks decapping via interaction with eIF4E (EIF4E and EIF4E2), thereby protecting deadenylated and repressed mRNAs from degradation. Component of a multiprotein complex that sequesters and represses translation of proneurogenic factors during neurogenesis. Promotes miRNA-mediated translational repression. Required for the formation of P-bodies. Involved in mRNA translational repression mediated by the miRNA effector TNRC6B by protecting TNRC6B-targeted mRNAs from decapping and subsequent decay. Also acts as a nucleoplasmic shuttling protein, which mediates the nuclear import of EIF4E and DDX6 by a piggy-back mechanism. The polypeptide is Eukaryotic translation initiation factor 4E transporter (Homo sapiens (Human)).